Consider the following 269-residue polypeptide: Ice-binding protein (269 aa).

Positions 1–24 (MLKINRKYAIILAIVAFSSFQTEA) are cleaved as a signal peptide. 7 consecutive short sequence motifs (probable ice-binding motif (T/S-X-T)) follow at residues 45–47 (TVT), 65–67 (SAT), 128–130 (SAQ), 154–156 (TLT), 180–182 (SAT), 198–200 (SIT), and 218–220 (AVT). The segment at 240–263 (VPEPDSSLAVLGSGLVSLLFAFRK) is PEP C-terminal anchor. The chain crosses the membrane as a helical span at residues 245-261 (SSLAVLGSGLVSLLFAF).

It belongs to the ice-binding protein family.

Its subcellular location is the cell outer membrane. A probable ice-binding protein that has ice-structuring activities in vitro. Thought not to anchor the cyanobacterium to ice surfaces, as its habitat is shallow puddles fed by glacier meltwater. The chain is Ice-binding protein from Nostoc sp. (strain HG1).